We begin with the raw amino-acid sequence, 80 residues long: Exodeoxyribonuclease 7 small subunit (80 aa).

This sequence belongs to the XseB family. As to quaternary structure, heterooligomer composed of large and small subunits.

It localises to the cytoplasm. The enzyme catalyses Exonucleolytic cleavage in either 5'- to 3'- or 3'- to 5'-direction to yield nucleoside 5'-phosphates.. Bidirectionally degrades single-stranded DNA into large acid-insoluble oligonucleotides, which are then degraded further into small acid-soluble oligonucleotides. In Vibrio campbellii (strain ATCC BAA-1116), this protein is Exodeoxyribonuclease 7 small subunit.